A 148-amino-acid polypeptide reads, in one-letter code: Urease accessory protein UreE (148 aa).

This sequence belongs to the UreE family.

The protein resides in the cytoplasm. In terms of biological role, involved in urease metallocenter assembly. Binds nickel. Probably functions as a nickel donor during metallocenter assembly. In Nostoc punctiforme (strain ATCC 29133 / PCC 73102), this protein is Urease accessory protein UreE.